Reading from the N-terminus, the 1930-residue chain is Ankyrin repeat domain-containing protein SAT10 (1930 aa).

ANK repeat units follow at residues 840–872 (FRHTPLGVATAYGDADVIDLLINHDISWWDLEE), 878–908 (GTWNALHHAALGGQRNIMCKLLLQQRKGVLN), 920–949 (SGNTPLILAASRGFHKIVALLLEDGSMRGY), 959–989 (QRSSALLAAARYGFSQTLEMLLTYEGIDYSK), 993–1023 (NGASILHLALVNDREAAALQILAHKDIFSNE), 1073–1102 (SGLTSLTIAIWRNLKSIVEILIAMDADANG), 1106–1135 (EFEAPLVAAAEVGSFELFTMFTKIGATKTE), 1144–1174 (GRTRPLHAACAMGHLEVVRELLKDSVTQLSH), 1178–1205 (NQRTPLCAAISRDQNHVISVLLDRETET), 1206–1235 (GLQEGLWEAARSGKAHILDQLLRRGAEINA), 1239–1268 (YGNTALQWASYYNKPRCVERLLLGGARLDL), 1272–1301 (DNVNALGDAARSGSAEPLKLLVDVGVDVNA), 1304–1333 (GGDTALCRAIWAEEVECVSVLLQGGAKFIL), 1339–1368 (RFENLLTFAVQVSSPEILRLLLKAPEERDL), 1400–1429 (SGWTILHLAAVHGTLAGLTKVLDHATGRAA), 1514–1543 (QNMLASAWMDTERSLKLLGILLEAGVSLTP), 1548–1577 (RHGTALHTAALFSPKPLVEKVIETSRMLAD), 1615–1644 (MGRNAVHLAAAAGARSVLEKIFEVEENEDL), 1651–1680 (DGWTPFHWACRGEDDDCARFLIEKARKIFD), and 1696–1724 (KTWTPLDVARFHQRREVELLLSLGMTTSD).

It participates in mycotoxin biosynthesis. Its function is as follows. Ankyrin repeat domain-containing protein; part of the satratoxin SC1 cluster involved in the biosynthesis of satratoxins, trichothecene mycotoxins that are associated with human food poisonings. Satratoxins are suggested to be made by products of multiple gene clusters (SC1, SC2 and SC3) that encode 21 proteins in all, including polyketide synthases, acetyltransferases, and other enzymes expected to modify the trichothecene skeleton. SC1 encodes 10 proteins, SAT1 to SAT10. The largest are SAT8, which encodes a putative polyketide synthase (PKS) with a conventional non-reducing architecture, and SAT10, a putative protein containing four ankyrin repeats and thus may be involved in protein scaffolding. The putative short-chain reductase SAT3 may assist the PKS in some capacity. SAT6 contains a secretory lipase domain and acts probably as a trichothecene esterase. SAT5 encodes a putative acetyltransferase, and so, with SAT6, may affect endogenous protection from toxicity. The probable transcription factor SAT9 may regulate the expression of the SC1 cluster. SC2 encodes proteins SAT11 to SAT16, the largest of which encodes the putative reducing PKS SAT13. SAT11 is a cytochrome P450 monooxygenase, while SAT14 and SAT16 are probable acetyltransferases. The SC2 cluster may be regulated by the transcription factor SAT15. SC3 is a small cluster that encodes 5 proteins, SAT17 to SAT21. SAT21 is a putative MFS-type transporter which may have a role in exporting secondary metabolites. The four other proteins putatively encoded in SC3 include the taurine hydroxylase-like protein SAT17, the O-methyltransferase SAT18, the acetyltransferase SAT19, and the Cys6-type zinc finger SAT20, the latter being probably involved in regulation of SC3 expression. The protein is Ankyrin repeat domain-containing protein SAT10 of Stachybotrys chartarum (strain CBS 109288 / IBT 7711) (Toxic black mold).